A 106-amino-acid chain; its full sequence is UPF0145 protein MA_3383 (106 aa).

This sequence belongs to the UPF0145 family.

The sequence is that of UPF0145 protein MA_3383 from Methanosarcina acetivorans (strain ATCC 35395 / DSM 2834 / JCM 12185 / C2A).